Here is a 158-residue protein sequence, read N- to C-terminus: NADPH-dependent 7-cyano-7-deazaguanine reductase (158 aa).

Cysteine 56 serves as the catalytic Thioimide intermediate. Aspartate 63 serves as the catalytic Proton donor. Residues 78-80 and 97-98 contribute to the substrate site; these read VES and HE.

The protein belongs to the GTP cyclohydrolase I family. QueF type 1 subfamily.

Its subcellular location is the cytoplasm. It carries out the reaction 7-aminomethyl-7-carbaguanine + 2 NADP(+) = 7-cyano-7-deazaguanine + 2 NADPH + 3 H(+). It participates in tRNA modification; tRNA-queuosine biosynthesis. Functionally, catalyzes the NADPH-dependent reduction of 7-cyano-7-deazaguanine (preQ0) to 7-aminomethyl-7-deazaguanine (preQ1). The protein is NADPH-dependent 7-cyano-7-deazaguanine reductase of Rhodopseudomonas palustris (strain BisB5).